Here is a 171-residue protein sequence, read N- to C-terminus: Translationally-controlled tumor protein homolog (171 aa).

One can recognise a TCTP domain in the interval 1 to 171 (MIIYKDIITG…FKDGLEIEKC (171 aa)).

The protein belongs to the TCTP family.

It localises to the cytoplasm. Involved in calcium binding and microtubule stabilization. This is Translationally-controlled tumor protein homolog (tpt1) from Labeo rohita (Indian major carp).